We begin with the raw amino-acid sequence, 387 residues long: N6-succino-2-amino-2'-deoxyadenylate synthase (387 aa).

Residue S14 is the Proton acceptor of the active site. S14, T15, G16, K17, and G18 together coordinate ATP. A dGMP-binding site is contributed by S14. Mg(2+) is bound at residue S14. N40 contributes to the dGMP binding site. 3 residues coordinate ATP: G42, H43, and T44. G42 lines the Mg(2+) pocket. Residues S125, T126, and R140 each contribute to the dGMP site. Residue Q207 participates in ATP binding. T222 is a binding site for dGMP. A Mg(2+)-binding site is contributed by T293. L-aspartate-binding residues include T293, V294, and R299. ATP is bound by residues N324 and N327.

Belongs to the Caudovirales PurZ family. Mg(2+) serves as cofactor.

It carries out the reaction dGMP + L-aspartate + ATP = (2S)-2-amino-2'-deoxyadenylo-succinate + ADP + phosphate + 2 H(+). It participates in purine metabolism. In terms of biological role, involved in the synthesis of the atypical nucleotide dZTP (2-amino-2'-deoxyadenosine-5'-triphosphate). Catalyzes the condensation of aspartate with deoxyguanylate into dSMP (N6-succino-2-amino-2'-deoxyadenylate), which undergoes defumarylation and phosphorylation respectively by host PurB and guanylate/nucleoside diphosphate kinases to give dZTP. dZTP is integrated into the viral genome instead of adenine by the viral DNA polymerase. This Z-base probably completely replaces adenosine and forms a triple bond to the opposite T-base. The resulting non-standard viral DNA is called Z-genome. The chemically modified DNA is probably harder for the host bacteria to digest with nucleases or restriction enzymes. In Acinetobacter phage SH-Ab 15497, this protein is N6-succino-2-amino-2'-deoxyadenylate synthase.